The primary structure comprises 131 residues: Small ribosomal subunit protein uS8 (131 aa).

This sequence belongs to the universal ribosomal protein uS8 family. As to quaternary structure, part of the 30S ribosomal subunit. Contacts proteins S5 and S12.

Functionally, one of the primary rRNA binding proteins, it binds directly to 16S rRNA central domain where it helps coordinate assembly of the platform of the 30S subunit. The polypeptide is Small ribosomal subunit protein uS8 (Ralstonia nicotianae (strain ATCC BAA-1114 / GMI1000) (Ralstonia solanacearum)).